The chain runs to 225 residues: Insulin-induced gene 2 protein (225 aa).

Topologically, residues 1–28 (MAEGETESPGPKKCGPYISSVTSQSVNL) are cytoplasmic. The chain crosses the membrane as a helical span at residues 29–51 (MIRGVVLFFIGVFLALVLNLLQI). Topologically, residues 52-70 (QRNVTLFPPDVIASIFSSA) are lumenal. Residues 71 to 88 (WWVPPCCGTASAVIGLLY) form a helical membrane-spanning segment. The Cytoplasmic segment spans residues 89 to 103 (PCIDRHLGEPHKFKR). Residues 104 to 126 (EWSSVMRCVAVFVGINHASAKVD) form a helical membrane-spanning segment. At 127 to 129 (FDN) the chain is on the lumenal side. The helical transmembrane segment at 130–148 (NIQLSLTLAALSIGLWWTF) threads the bilayer. The Cytoplasmic segment spans residues 149–153 (DRSRS). Position 151 is a phosphoserine (S151). A helical membrane pass occupies residues 154-175 (GFGLGVGIAFLATLVTQLLVYN). At 176 to 189 (GVYQYTSPDFLYVR) the chain is on the lumenal side. A helical membrane pass occupies residues 190–207 (SWLPCIFFAGGITMGNIG). The Cytoplasmic segment spans residues 208–225 (RQLAMYECKVIAEKSHQE). C215 carries the cysteine sulfenic acid (-SOH); alternate modification. Residue C215 forms a Glycyl cysteine thioester (Cys-Gly) (interchain with G-Cter in ubiquitin); alternate linkage. Positions 219 to 225 (AEKSHQE) match the KxHxx motif.

This sequence belongs to the INSIG family. As to quaternary structure, interacts with SCAP; interaction is direct and only takes place in the presence of sterols; it prevents interaction between SCAP and the coat protein complex II (COPII). Associates with the SCAP-SREBP complex (composed of SCAP and SREBF1/SREBP1 or SREBF2/SREBP2); association is mediated via its interaction with SCAP and only takes place in the presence of sterols. Interacts with RNF139. Interacts with RNF145. In terms of processing, phosphorylation at Ser-151 by PCK1 reduces binding to oxysterol, disrupting the interaction between INSIG2 and SCAP, thereby promoting nuclear translocation of SREBP proteins (SREBF1/SREBP1 or SREBF2/SREBP2) and subsequent transcription of downstream lipogenesis-related genes. Post-translationally, polyubiquitinated by AMFR/gp78 at Cys-215 in some tissues such as adipose tissues, undifferentiated myoblasts and liver, leading to its degradation. In differentiated myotubes, Cys-215 oxidation prevents ubiquitination at the same site, resulting in protein stabilization. Oxidized at Cys-215 in differentiated myotubes, preventing ubiquitination at the same site, and resulting in protein stabilization.

It is found in the endoplasmic reticulum membrane. Functionally, oxysterol-binding protein that mediates feedback control of cholesterol synthesis by controlling both endoplasmic reticulum to Golgi transport of SCAP and degradation of HMGCR. Acts as a negative regulator of cholesterol biosynthesis by mediating the retention of the SCAP-SREBP complex in the endoplasmic reticulum, thereby blocking the processing of sterol regulatory element-binding proteins (SREBPs) SREBF1/SREBP1 and SREBF2/SREBP2. Binds oxysterol, including 22-hydroxycholesterol, 24-hydroxycholesterol, 25-hydroxycholesterol and 27-hydroxycholesterol, regulating interaction with SCAP and retention of the SCAP-SREBP complex in the endoplasmic reticulum. In presence of oxysterol, interacts with SCAP, retaining the SCAP-SREBP complex in the endoplasmic reticulum, thereby preventing SCAP from escorting SREBF1/SREBP1 and SREBF2/SREBP2 to the Golgi. Sterol deprivation or phosphorylation by PCK1 reduce oxysterol-binding, disrupting the interaction between INSIG2 and SCAP, thereby promoting Golgi transport of the SCAP-SREBP complex, followed by processing and nuclear translocation of SREBF1/SREBP1 and SREBF2/SREBP2. Also regulates cholesterol synthesis by regulating degradation of HMGCR: initiates the sterol-mediated ubiquitin-mediated endoplasmic reticulum-associated degradation (ERAD) of HMGCR via recruitment of the reductase to the ubiquitin ligase RNF139. The sequence is that of Insulin-induced gene 2 protein from Papio anubis (Olive baboon).